The following is a 191-amino-acid chain: Probable protein-S-isoprenylcysteine O-methyltransferase (191 aa).

A run of 3 helical transmembrane segments spans residues 8 to 28, 45 to 65, and 66 to 86; these read WLFAAALVIFHGSEYVLAAAF, YVLAMSFAMLEHLTEALLFPE, and LKEYWFVSYVGLVMVIIGEVI. Residues 110-113, tyrosine 118, and 123-126 each bind S-adenosyl-L-methionine; these read HKLI and HPGY. Residues 129–149 traverse the membrane as a helical segment; the sequence is FLIWAVGTQVMLCNPLSTVAF. Arginine 160 serves as a coordination point for substrate. Glutamate 164 contacts S-adenosyl-L-methionine.

The protein belongs to the class VI-like SAM-binding methyltransferase superfamily. Isoprenylcysteine carboxyl methyltransferase family. It depends on Zn(2+) as a cofactor.

It localises to the endoplasmic reticulum membrane. It carries out the reaction [protein]-C-terminal S-[(2E,6E)-farnesyl]-L-cysteine + S-adenosyl-L-methionine = [protein]-C-terminal S-[(2E,6E)-farnesyl]-L-cysteine methyl ester + S-adenosyl-L-homocysteine. Catalyzes the post-translational methylation of isoprenylated C-terminal cysteine residues. Carboxyl methylation is a reversible and potentially regulated step in the post-translational modification of prenylated proteins. In Oryza sativa subsp. indica (Rice), this protein is Probable protein-S-isoprenylcysteine O-methyltransferase (ICMT).